The following is a 623-amino-acid chain: Translation initiation factor IF-2 (623 aa).

Over residues 1-18 (MTLNKKTNNENSSKTTPK) the composition is skewed to low complexity. Disordered regions lie at residues 1 to 21 (MTLNKKTNNENSSKTTPKLSK) and 92 to 115 (PQKEQTPPQLQPQKPPLTKSKLQA). Residues 125–293 (KTPPIVTIMG…ILLFSEIQNL (169 aa)) form the tr-type G domain. The G1 stretch occupies residues 134–141 (GHVDHGKT). Residue 134–141 (GHVDHGKT) participates in GTP binding. The segment at 159 to 163 (GITQH) is G2. The tract at residues 180 to 183 (DTPG) is G3. GTP is bound by residues 180 to 184 (DTPGH) and 234 to 237 (NKVD). Residues 234-237 (NKVD) form a G4 region. The G5 stretch occupies residues 270–272 (SAL).

This sequence belongs to the TRAFAC class translation factor GTPase superfamily. Classic translation factor GTPase family. IF-2 subfamily.

The protein resides in the cytoplasm. One of the essential components for the initiation of protein synthesis. Protects formylmethionyl-tRNA from spontaneous hydrolysis and promotes its binding to the 30S ribosomal subunits. Also involved in the hydrolysis of GTP during the formation of the 70S ribosomal complex. This chain is Translation initiation factor IF-2, found in Aster yellows witches'-broom phytoplasma (strain AYWB).